We begin with the raw amino-acid sequence, 568 residues long: 2-succinyl-5-enolpyruvyl-6-hydroxy-3-cyclohexene-1-carboxylate synthase (568 aa).

The protein belongs to the TPP enzyme family. MenD subfamily. As to quaternary structure, homodimer. Mg(2+) serves as cofactor. It depends on Mn(2+) as a cofactor. The cofactor is thiamine diphosphate.

The enzyme catalyses isochorismate + 2-oxoglutarate + H(+) = 5-enolpyruvoyl-6-hydroxy-2-succinyl-cyclohex-3-ene-1-carboxylate + CO2. It participates in quinol/quinone metabolism; 1,4-dihydroxy-2-naphthoate biosynthesis; 1,4-dihydroxy-2-naphthoate from chorismate: step 2/7. The protein operates within quinol/quinone metabolism; menaquinone biosynthesis. Catalyzes the thiamine diphosphate-dependent decarboxylation of 2-oxoglutarate and the subsequent addition of the resulting succinic semialdehyde-thiamine pyrophosphate anion to isochorismate to yield 2-succinyl-5-enolpyruvyl-6-hydroxy-3-cyclohexene-1-carboxylate (SEPHCHC). The chain is 2-succinyl-5-enolpyruvyl-6-hydroxy-3-cyclohexene-1-carboxylate synthase from Actinobacillus succinogenes (strain ATCC 55618 / DSM 22257 / CCUG 43843 / 130Z).